The primary structure comprises 345 residues: uncharacterized protein (345 aa).

The next 2 membrane-spanning stretches (helical) occupy residues 23 to 43 (VVGFCGVFALIALSLGIYSYV) and 56 to 76 (FLIALGGFTLLLSFVINFVAL). A disordered region spans residues 326-345 (VTEPTTNSKRKPVKAKKAKK). Basic residues predominate over residues 333–345 (SKRKPVKAKKAKK).

It localises to the cell membrane. This is an uncharacterized protein from Mycoplasma pneumoniae (strain ATCC 29342 / M129 / Subtype 1) (Mycoplasmoides pneumoniae).